The following is a 317-amino-acid chain: L-lactate dehydrogenase 1 (317 aa).

NAD(+) contacts are provided by residues Val17, Asp38, Lys43, Tyr69, and 83–84 (GA). Substrate-binding residues include Gln86 and Arg92. NAD(+)-binding positions include Ser105, 122-124 (ATN), and Ser147. 124 to 127 (NPVD) is a binding site for substrate. A substrate-binding site is contributed by 152 to 155 (DSAR). The active-site Proton acceptor is His179. Tyr223 carries the post-translational modification Phosphotyrosine. Thr232 provides a ligand contact to substrate.

The protein belongs to the LDH/MDH superfamily. LDH family. As to quaternary structure, homotetramer.

The protein localises to the cytoplasm. The enzyme catalyses (S)-lactate + NAD(+) = pyruvate + NADH + H(+). The protein operates within fermentation; pyruvate fermentation to lactate; (S)-lactate from pyruvate: step 1/1. Its function is as follows. Catalyzes the conversion of lactate to pyruvate (Potential). Appears to be the primary factor that allows S.aureus growth during nitrosative stress in both aerobically and anaerobically cultured cells. This is L-lactate dehydrogenase 1 from Staphylococcus aureus (strain MRSA252).